The following is a 538-amino-acid chain: Acetylcholine receptor subunit alpha-type acr-7 (538 aa).

The first 27 residues, 1 to 27, serve as a signal peptide directing secretion; sequence MMVQSIQIVLPVALFFLIVFNGFTVEG. Residues 28–250 are Extracellular-facing; the sequence is SKKEAQLYRD…LHLRRRTFYY (223 aa). 2 N-linked (GlcNAc...) asparagine glycosylation sites follow: Asn-41 and Asn-101. 2 disulfides stabilise this stretch: Cys-160–Cys-174 and Cys-229–Cys-230. Transmembrane regions (helical) follow at residues 251 to 271, 280 to 300, and 313 to 333; these read VFNV…AFCL, IGLQ…LSEM, and VFFS…ILVL. At 334–513 the chain is on the cytoplasmic side; sequence NIRYRQITNH…FAAQAVDRFC (180 aa). The helical transmembrane segment at 514–534 threads the bilayer; sequence LIIFTIVFIICCFIFVAIPPI.

Belongs to the ligand-gated ion channel (TC 1.A.9) family. Acetylcholine receptor (TC 1.A.9.1) subfamily. As to quaternary structure, forms a homooligomeric channel blocked by alpha-bungarotoxin. The structure is probably pentameric.

It localises to the postsynaptic cell membrane. The protein localises to the cell membrane. Its function is as follows. After binding acetylcholine, the AChR responds by an extensive change in conformation that affects all subunits and leads to opening of an ion-conducting channel across the plasma membrane. This Caenorhabditis elegans protein is Acetylcholine receptor subunit alpha-type acr-7 (acr-7).